The sequence spans 355 residues: Putative transport protein PH1000 (355 aa).

A run of 8 helical transmembrane segments spans residues 34 to 54 (VTWIIIITLVALAIKTILPFF), 55 to 75 (SPLFFAFITAYALYPLHIKLK), 84 to 104 (AILLTLFLLLGALMILLILVY), 158 to 178 (FSVPKYLLQVIVYLTFVYFFL), 212 to 232 (VWLLLNIVKGILMTLGFLIFK), 240 to 260 (ILAGLLTVLFSFIPLFEGWMI), 274 to 294 (IIAGIGLAVYGFTLVSPLPDF), and 310 to 330 (VLVLIGMIGGTWGLGLKGLII).

Belongs to the autoinducer-2 exporter (AI-2E) (TC 2.A.86) family.

The protein localises to the cell membrane. The polypeptide is Putative transport protein PH1000 (Pyrococcus horikoshii (strain ATCC 700860 / DSM 12428 / JCM 9974 / NBRC 100139 / OT-3)).